Consider the following 476-residue polypeptide: Probable periplasmic serine endoprotease DegP-like (476 aa).

The N-terminal stretch at 1–27 (MSIPRLKSYFTILATVLVLGQAVSAQA) is a signal peptide. Catalysis depends on charge relay system residues histidine 116, aspartate 146, and serine 219. Substrate-binding positions include 217–219 (GNS) and 274–278 (LGVVI). 2 PDZ domains span residues 263–354 (LKTG…IRDG) and 360–465 (ELTV…LRQG).

The protein belongs to the peptidase S1C family.

The protein resides in the periplasm. It carries out the reaction Acts on substrates that are at least partially unfolded. The cleavage site P1 residue is normally between a pair of hydrophobic residues, such as Val-|-Val.. Might be efficient in the degradation of transiently denatured and unfolded proteins which accumulate in the periplasm following stress conditions. The sequence is that of Probable periplasmic serine endoprotease DegP-like (mucD) from Pseudomonas fluorescens (strain ATCC BAA-477 / NRRL B-23932 / Pf-5).